We begin with the raw amino-acid sequence, 180 residues long: Major urinary protein 1 (180 aa).

The N-terminal stretch at 1 to 18 is a signal peptide; it reads MKMLLLLCLGLTLVCVHA. Cys-82 and Cys-175 are joined by a disulfide.

It belongs to the calycin superfamily. Lipocalin family. In terms of tissue distribution, abundant in the urine of adult male mice but absent from that of females.

Its subcellular location is the secreted. In terms of biological role, binds pheromones that are released from drying urine of males. These pheromones affect the sexual behavior of females. This is Major urinary protein 1 (Mup1) from Mus musculus (Mouse).